The following is a 147-amino-acid chain: Large ribosomal subunit protein uL13 (147 aa).

This sequence belongs to the universal ribosomal protein uL13 family. Part of the 50S ribosomal subunit.

In terms of biological role, this protein is one of the early assembly proteins of the 50S ribosomal subunit, although it is not seen to bind rRNA by itself. It is important during the early stages of 50S assembly. The protein is Large ribosomal subunit protein uL13 of Beutenbergia cavernae (strain ATCC BAA-8 / DSM 12333 / CCUG 43141 / JCM 11478 / NBRC 16432 / NCIMB 13614 / HKI 0122).